The primary structure comprises 171 residues: 3-hydroxydecanoyl-[acyl-carrier-protein] dehydratase (171 aa).

The active site involves histidine 70.

The protein belongs to the thioester dehydratase family. FabA subfamily. As to quaternary structure, homodimer.

It is found in the cytoplasm. The catalysed reaction is a (3R)-hydroxyacyl-[ACP] = a (2E)-enoyl-[ACP] + H2O. It carries out the reaction (3R)-hydroxydecanoyl-[ACP] = (2E)-decenoyl-[ACP] + H2O. It catalyses the reaction (2E)-decenoyl-[ACP] = (3Z)-decenoyl-[ACP]. It functions in the pathway lipid metabolism; fatty acid biosynthesis. Functionally, necessary for the introduction of cis unsaturation into fatty acids. Catalyzes the dehydration of (3R)-3-hydroxydecanoyl-ACP to E-(2)-decenoyl-ACP and then its isomerization to Z-(3)-decenoyl-ACP. Can catalyze the dehydratase reaction for beta-hydroxyacyl-ACPs with saturated chain lengths up to 16:0, being most active on intermediate chain length. This Shewanella loihica (strain ATCC BAA-1088 / PV-4) protein is 3-hydroxydecanoyl-[acyl-carrier-protein] dehydratase.